Consider the following 256-residue polypeptide: uncharacterized protein (256 aa).

A run of 3 helical transmembrane segments spans residues 42–62 (LIALTVLSNLIIISFVLIWFF), 73–93 (FFTLFIPFFISLLVAIFLIFL), and 108–128 (WLFLWTCVFSSLPIFNLWLIV).

Its subcellular location is the cell membrane. This is an uncharacterized protein from Mycoplasma genitalium (strain ATCC 33530 / DSM 19775 / NCTC 10195 / G37) (Mycoplasmoides genitalium).